Consider the following 266-residue polypeptide: MENSNNTNIFIIFLSFLMIVLSITSIELPWQRIFLSGKFLGMKIFDLTVDHELFDSGIYYPTRLNEVWIEITSNSINNGIMTCMGINILSLVIILINPFKRFFKFISDSHYLFIEKILIRSLSVMIVIFYILSTTIGLMLSGTYCQVTKSSFDSTDGSTLSDESCYSLDMFSKSHIQDLVIRSTEVSSKPMKGWYLSIVLLFLSLILAVMVFIRFKRISPKLVDLGYRHYLTNNKSSSNNDTGSEVIGLSSNESDNIATVEIEPLL.

The next 4 helical transmembrane spans lie at 9–29 (IFII…IELP), 79–99 (GIMT…INPF), 122–142 (LSVM…MLSG), and 193–213 (GWYL…MVFI).

The protein localises to the membrane. This is an uncharacterized protein from Dictyostelium discoideum (Social amoeba).